Consider the following 1159-residue polypeptide: DNA-directed RNA polymerase subunit beta (1159 aa).

It belongs to the RNA polymerase beta chain family. In terms of assembly, the RNAP catalytic core consists of 2 alpha, 1 beta, 1 beta' and 1 omega subunit. When a sigma factor is associated with the core the holoenzyme is formed, which can initiate transcription.

The catalysed reaction is RNA(n) + a ribonucleoside 5'-triphosphate = RNA(n+1) + diphosphate. Functionally, DNA-dependent RNA polymerase catalyzes the transcription of DNA into RNA using the four ribonucleoside triphosphates as substrates. In Deinococcus radiodurans (strain ATCC 13939 / DSM 20539 / JCM 16871 / CCUG 27074 / LMG 4051 / NBRC 15346 / NCIMB 9279 / VKM B-1422 / R1), this protein is DNA-directed RNA polymerase subunit beta.